The primary structure comprises 33 residues: Defensin-1 (33 aa).

Intrachain disulfides connect Cys4-Cys32, Cys6-Cys21, and Cys11-Cys31.

This sequence belongs to the alpha-defensin family.

The protein localises to the secreted. Has antibacterial activity against the Gram-negative bacterium E.coli and the Gram-positive bacteria L.monocytogenes and S.aureus. Has antifungal activity against C.albicans. The sequence is that of Defensin-1 from Papio hamadryas (Hamadryas baboon).